We begin with the raw amino-acid sequence, 154 residues long: S-protein homolog 12 (154 aa).

A signal peptide spans 1-30 (MGTNKIPKTLNGNLVLILIITIMMVTHSHG).

This sequence belongs to the plant self-incompatibility (S1) protein family.

It is found in the secreted. This chain is S-protein homolog 12, found in Arabidopsis thaliana (Mouse-ear cress).